A 227-amino-acid polypeptide reads, in one-letter code: Orotidine 5'-phosphate decarboxylase (227 aa).

Substrate contacts are provided by residues D8, K30, 59–68 (DLKLYDIPYT), T118, R178, Q187, G207, and R208. Residue K61 is the Proton donor of the active site.

It belongs to the OMP decarboxylase family. Type 1 subfamily. Homodimer.

The catalysed reaction is orotidine 5'-phosphate + H(+) = UMP + CO2. Its pathway is pyrimidine metabolism; UMP biosynthesis via de novo pathway; UMP from orotate: step 2/2. Catalyzes the decarboxylation of orotidine 5'-monophosphate (OMP) to uridine 5'-monophosphate (UMP). The protein is Orotidine 5'-phosphate decarboxylase of Helicobacter pylori (strain Shi470).